The following is a 260-amino-acid chain: MIEVKGVWFWYEEGKPVLKNISLSFDEGILAVVGPNGSGKTTLVKMFNGLIKPKKGDVLVDGINTKEASTAQLSRIVGYVFQNPDAMFFEETVFDEVAFGPRNLGLSEEEVKERVKWALEAVGLKGFEDKNPFKLSGGEKQRLAIACILAMNPKYLVLDEPTTGLDERGVGALKNIIEELRKEGKSFVIVTHDMDLVLEVADKVLLLSNGEVQFYGDVFEFFELDLKRYKLEEPELVKICRGIGLKPVRSVEELLRGIGL.

Residues 2–234 (IEVKGVWFWY…DLKRYKLEEP (233 aa)) enclose the ABC transporter domain. 34 to 41 (GPNGSGKT) is a binding site for ATP.

This sequence belongs to the ABC transporter superfamily.

It is found in the cell membrane. Functionally, probably part of an ABC transporter complex. Responsible for energy coupling to the transport system. The polypeptide is Putative ABC transporter ATP-binding protein PF0068 (Pyrococcus furiosus (strain ATCC 43587 / DSM 3638 / JCM 8422 / Vc1)).